We begin with the raw amino-acid sequence, 93 residues long: Photosystem I iron-sulfur center (93 aa).

4Fe-4S ferredoxin-type domains are found at residues 13 to 43 (KDHEIRIYSTCIGCTQCVRACPTDVLEMVPS) and 50 to 80 (QVVTVPRIEDCVGCKRCESACPTDFLSIRVY). [4Fe-4S] cluster contacts are provided by cysteine 23, cysteine 26, cysteine 29, cysteine 33, cysteine 60, cysteine 63, cysteine 66, and cysteine 70.

The eukaryotic PSI reaction center is composed of at least 11 subunits. The cofactor is [4Fe-4S] cluster.

It is found in the plastid. Its subcellular location is the chloroplast thylakoid membrane. The enzyme catalyses reduced [plastocyanin] + hnu + oxidized [2Fe-2S]-[ferredoxin] = oxidized [plastocyanin] + reduced [2Fe-2S]-[ferredoxin]. In terms of biological role, apoprotein for the two 4Fe-4S centers FA and FB of photosystem I (PSI); essential for photochemical activity. FB is the terminal electron acceptor of PSI, donating electrons to ferredoxin. The C-terminus interacts with PsaA/B/D and helps assemble the protein into the PSI complex. Required for binding of PsaD and PsaE to PSI. PSI is a plastocyanin-ferredoxin oxidoreductase, converting photonic excitation into a charge separation, which transfers an electron from the donor P700 chlorophyll pair to the spectroscopically characterized acceptors A0, A1, FX, FA and FB in turn. The protein is Photosystem I iron-sulfur center of Bigelowiella natans (Pedinomonas minutissima).